Here is a 450-residue protein sequence, read N- to C-terminus: UDP-N-acetylmuramoylalanine--D-glutamate ligase (450 aa).

119–125 (GSNGKTT) lines the ATP pocket.

It belongs to the MurCDEF family.

It localises to the cytoplasm. It carries out the reaction UDP-N-acetyl-alpha-D-muramoyl-L-alanine + D-glutamate + ATP = UDP-N-acetyl-alpha-D-muramoyl-L-alanyl-D-glutamate + ADP + phosphate + H(+). The protein operates within cell wall biogenesis; peptidoglycan biosynthesis. Cell wall formation. Catalyzes the addition of glutamate to the nucleotide precursor UDP-N-acetylmuramoyl-L-alanine (UMA). This is UDP-N-acetylmuramoylalanine--D-glutamate ligase from Streptococcus pneumoniae (strain ATCC 700669 / Spain 23F-1).